Here is a 225-residue protein sequence, read N- to C-terminus: MAVRSLWACRLRVQRLLAWSAAWESKGWPLPFSTATQRTAGEDCRSEDPPDELGPPLAERALRVKAVKLEKEVQDLTVRYQRAVADCENIRRRTQRCVEDAKIFGIQSFCKDLVEVADILEKTTECISEESEPEDQKLTLEKVFRGLLLLEAKLKSVFAKHGLEKLTPIGDKYDPHEHELICHVPAGVGVQPGTVALVRQDGYKLHGRTIRLARVEVAVESQRRL.

The N-terminal 32 residues, 1 to 32 (MAVRSLWACRLRVQRLLAWSAAWESKGWPLPF), are a transit peptide targeting the mitochondrion. Lys-142 is subject to N6-acetyllysine.

Belongs to the GrpE family. In terms of assembly, probable component of the PAM complex at least composed of a mitochondrial HSP70 protein, GRPEL1 or GRPEL2, TIMM44, TIMM16/PAM16 and TIMM14/DNAJC19.

The protein resides in the mitochondrion matrix. In terms of biological role, essential component of the PAM complex, a complex required for the translocation of transit peptide-containing proteins from the inner membrane into the mitochondrial matrix in an ATP-dependent manner. Seems to control the nucleotide-dependent binding of mitochondrial HSP70 to substrate proteins. Stimulates ATPase activity of mt-HSP70. May also serve to modulate the interconversion of oligomeric (inactive) and monomeric (active) forms of mt-HSP70. This chain is GrpE protein homolog 2, mitochondrial (GRPEL2), found in Pongo abelii (Sumatran orangutan).